The chain runs to 535 residues: Probable monogalactosyldiacylglycerol synthase, chloroplastic (535 aa).

Residues 1–113 (MMQHSSSVTQ…KIPLGFASVG (113 aa)) constitute a chloroplast transit peptide.

The protein belongs to the glycosyltransferase 28 family.

It is found in the plastid. The protein localises to the chloroplast membrane. It catalyses the reaction a 1,2-diacyl-sn-glycerol + UDP-alpha-D-galactose = a 1,2-diacyl-3-O-(beta-D-galactosyl)-sn-glycerol + UDP + H(+). Functionally, involved in the synthesis of the major structural component of photosynthetic membranes. This Nicotiana tabacum (Common tobacco) protein is Probable monogalactosyldiacylglycerol synthase, chloroplastic (MGD A).